Here is a 198-residue protein sequence, read N- to C-terminus: Thymidine kinase (198 aa).

ATP contacts are provided by residues 15 to 22 and 87 to 90; these read GCMFSGKT and DEAQ. The active-site Proton acceptor is Glu88. Zn(2+) contacts are provided by Cys144, Cys147, Cys182, and His185.

It belongs to the thymidine kinase family. As to quaternary structure, homotetramer.

The protein resides in the cytoplasm. The catalysed reaction is thymidine + ATP = dTMP + ADP + H(+). This Coprothermobacter proteolyticus (strain ATCC 35245 / DSM 5265 / OCM 4 / BT) protein is Thymidine kinase.